Here is a 203-residue protein sequence, read N- to C-terminus: Leucyl/phenylalanyl-tRNA--protein transferase (203 aa).

This sequence belongs to the L/F-transferase family.

It localises to the cytoplasm. The enzyme catalyses N-terminal L-lysyl-[protein] + L-leucyl-tRNA(Leu) = N-terminal L-leucyl-L-lysyl-[protein] + tRNA(Leu) + H(+). It carries out the reaction N-terminal L-arginyl-[protein] + L-leucyl-tRNA(Leu) = N-terminal L-leucyl-L-arginyl-[protein] + tRNA(Leu) + H(+). The catalysed reaction is L-phenylalanyl-tRNA(Phe) + an N-terminal L-alpha-aminoacyl-[protein] = an N-terminal L-phenylalanyl-L-alpha-aminoacyl-[protein] + tRNA(Phe). In terms of biological role, functions in the N-end rule pathway of protein degradation where it conjugates Leu, Phe and, less efficiently, Met from aminoacyl-tRNAs to the N-termini of proteins containing an N-terminal arginine or lysine. This Chelativorans sp. (strain BNC1) protein is Leucyl/phenylalanyl-tRNA--protein transferase.